The chain runs to 300 residues: Putative S-adenosyl-L-methionine-dependent methyltransferase MAB_4328c (300 aa).

S-adenosyl-L-methionine-binding positions include D126 and 155–156 (DL).

Belongs to the UPF0677 family.

In terms of biological role, exhibits S-adenosyl-L-methionine-dependent methyltransferase activity. This chain is Putative S-adenosyl-L-methionine-dependent methyltransferase MAB_4328c, found in Mycobacteroides abscessus (strain ATCC 19977 / DSM 44196 / CCUG 20993 / CIP 104536 / JCM 13569 / NCTC 13031 / TMC 1543 / L948) (Mycobacterium abscessus).